Here is a 264-residue protein sequence, read N- to C-terminus: S-adenosylmethionine decarboxylase proenzyme (264 aa).

S113 (schiff-base intermediate with substrate; via pyruvic acid) is an active-site residue. S113 bears the Pyruvic acid (Ser); by autocatalysis mark. H118 functions as the Proton acceptor; for processing activity in the catalytic mechanism. C141 (proton donor; for catalytic activity) is an active-site residue.

This sequence belongs to the prokaryotic AdoMetDC family. Type 2 subfamily. In terms of assembly, heterooctamer of four alpha and four beta chains arranged as a tetramer of alpha/beta heterodimers. Pyruvate serves as cofactor. In terms of processing, is synthesized initially as an inactive proenzyme. Formation of the active enzyme involves a self-maturation process in which the active site pyruvoyl group is generated from an internal serine residue via an autocatalytic post-translational modification. Two non-identical subunits are generated from the proenzyme in this reaction, and the pyruvate is formed at the N-terminus of the alpha chain, which is derived from the carboxyl end of the proenzyme. The post-translation cleavage follows an unusual pathway, termed non-hydrolytic serinolysis, in which the side chain hydroxyl group of the serine supplies its oxygen atom to form the C-terminus of the beta chain, while the remainder of the serine residue undergoes an oxidative deamination to produce ammonia and the pyruvoyl group blocking the N-terminus of the alpha chain.

The catalysed reaction is S-adenosyl-L-methionine + H(+) = S-adenosyl 3-(methylsulfanyl)propylamine + CO2. The protein operates within amine and polyamine biosynthesis; S-adenosylmethioninamine biosynthesis; S-adenosylmethioninamine from S-adenosyl-L-methionine: step 1/1. In terms of biological role, catalyzes the decarboxylation of S-adenosylmethionine to S-adenosylmethioninamine (dcAdoMet), the propylamine donor required for the synthesis of the polyamines spermine and spermidine from the diamine putrescine. The sequence is that of S-adenosylmethionine decarboxylase proenzyme from Xanthomonas euvesicatoria pv. vesicatoria (strain 85-10) (Xanthomonas campestris pv. vesicatoria).